A 327-amino-acid chain; its full sequence is MDSSTAPLSIITKLALFERTCDSSYSPLAENLKYLVQFVYLLPAAMLHARILYILLWKHRNLYLKQSFYILFIMSCIACFTLVVQDIFFARVFQYMTQFCEPMSEFVENYPIFPAIYYPLQQHLHCAQPIIQILLTVNRMSCVVIPWKHSQVWKSFMKYAIALVILTPFLFIWNIIISKKLPVYTFGGFYIGYERVVIWATMTLFMLILRAITIVITAVCTFITVLRLTRMSKRLVSSERTLCIASFLISSCFLGTAAAESLFAFQVVRTSTSISYFLLPISWDILNVGTPIVMVMASSQLRRHVFGILKRSRSNSRVEDGTIVTGF.

The next 6 helical transmembrane spans lie at 35–55 (LVQFVYLLPAAMLHARILYIL), 70–90 (ILFIMSCIACFTLVVQDIFFA), 157–177 (MKYAIALVILTPFLFIWNIII), 181–203 (LPVYTFGGFYIGYERVVIWATMT), 244–264 (IASFLISSCFLGTAAAESLFA), and 277–297 (FLLPISWDILNVGTPIVMVMA).

Belongs to the nematode receptor-like protein srg family.

The protein resides in the membrane. The polypeptide is Serpentine receptor class gamma-2 (srg-2) (Caenorhabditis elegans).